The primary structure comprises 456 residues: Nuclear distribution protein PAC1 (456 aa).

Positions 9–41 (QADELHKSIIAYLSANDLPNTAAALRAELNLTE) constitute a LisH domain. Residues 61-88 (TSIVRLQKKIMDLEARNAALQSELDNLT) adopt a coiled-coil conformation. WD repeat units lie at residues 114–153 (SHRD…LEMT), 156–197 (GHTR…KNVR), 201–240 (GHDH…CVRS), 243–282 (GHTG…NPEN), 288–348 (GHEH…LMTL), 350–389 (GHDN…KCVK), 394–437 (AHDR…PDVQ), and 439–456 (RCVI…IFAA).

This sequence belongs to the WD repeat LIS1/nudF family. In terms of assembly, self-associates. Interacts with NDL1 and dynein.

It is found in the cytoplasm. Its subcellular location is the cytoskeleton. The protein localises to the spindle pole. Its function is as follows. Positively regulates the activity of the minus-end directed microtubule motor protein dynein. May enhance dynein-mediated microtubule sliding by targeting dynein to the microtubule plus end. Required for nuclear migration during vegetative growth as well as development. Required for retrograde early endosome (EE) transport from the hyphal tip. Required for localization of dynein to the mitotic spindle poles. Recruits additional proteins to the dynein complex at SPBs. The sequence is that of Nuclear distribution protein PAC1 from Ajellomyces capsulatus (strain H143) (Darling's disease fungus).